Here is a 64-residue protein sequence, read N- to C-terminus: Prokaryotic ubiquitin-like protein UBact (64 aa).

Basic and acidic residues-rich tracts occupy residues 1–12 (MSDLFRMEERRQ) and 33–64 (PDVK…RSGE). A disordered region spans residues 1–64 (MSDLFRMEER…ARRYRQRSGE (64 aa)). Residue E64 forms an Isoglutamyl lysine isopeptide (Glu-Lys) (interchain with K-? in acceptor proteins) linkage.

This sequence belongs to the ubiquitin-like protein UBact family.

May function as a protein modifier covalently attached to lysine residues of substrate proteins. This may serve to target the modified proteins for degradation by proteasomes. The sequence is that of Prokaryotic ubiquitin-like protein UBact from Chthonomonas calidirosea (strain DSM 23976 / ICMP 18418 / T49).